A 157-amino-acid chain; its full sequence is Small ribosomal subunit protein uS7 (157 aa).

It belongs to the universal ribosomal protein uS7 family. Part of the 30S ribosomal subunit. Contacts proteins S9 and S11.

Its function is as follows. One of the primary rRNA binding proteins, it binds directly to 16S rRNA where it nucleates assembly of the head domain of the 30S subunit. Is located at the subunit interface close to the decoding center, probably blocks exit of the E-site tRNA. The sequence is that of Small ribosomal subunit protein uS7 from Caldicellulosiruptor bescii (strain ATCC BAA-1888 / DSM 6725 / KCTC 15123 / Z-1320) (Anaerocellum thermophilum).